The primary structure comprises 357 residues: Low-salt glycan biosynthesis nucleotidyltransferase Agl11 (357 aa).

Aspartate 108 and aspartate 221 together coordinate Mg(2+).

The protein belongs to the glucose-1-phosphate thymidylyltransferase family. Mg(2+) serves as cofactor.

Its pathway is protein modification; protein glycosylation. It participates in cell surface structure biogenesis; S-layer biogenesis. In terms of biological role, nucleotidyltransferase involved in N-glycan biosynthetic pathway that takes place under low-salt conditions (1.75 M instead of 3.4 M). Participates in the formation of the tetrasaccharide present at 'Asn-532' of S-layer glycoprotein Csg, consisting of a sulfated hexose, 2 hexoses and rhamnose. Involved in the addition of final rhamnose (sugar 4) of the tetrasaccharide on the dolichol phosphate carrier. The polypeptide is Low-salt glycan biosynthesis nucleotidyltransferase Agl11 (agl11) (Haloferax volcanii (strain ATCC 29605 / DSM 3757 / JCM 8879 / NBRC 14742 / NCIMB 2012 / VKM B-1768 / DS2) (Halobacterium volcanii)).